We begin with the raw amino-acid sequence, 214 residues long: Glucose-6-phosphate isomerase (214 aa).

Fe cation-binding residues include H92, H94, E101, and H140.

The protein belongs to the archaeal-type GPI family. As to quaternary structure, homodimer.

It is found in the cytoplasm. The catalysed reaction is alpha-D-glucose 6-phosphate = beta-D-fructose 6-phosphate. It participates in carbohydrate degradation; glycolysis; D-glyceraldehyde 3-phosphate and glycerone phosphate from D-glucose: step 2/4. This Sinorhizobium medicae (strain WSM419) (Ensifer medicae) protein is Glucose-6-phosphate isomerase.